The following is a 286-amino-acid chain: 33 kDa chaperonin (286 aa).

Disulfide bonds link Cys-225/Cys-227 and Cys-258/Cys-261.

The protein belongs to the HSP33 family. In terms of processing, under oxidizing conditions two disulfide bonds are formed involving the reactive cysteines. Under reducing conditions zinc is bound to the reactive cysteines and the protein is inactive.

It localises to the cytoplasm. In terms of biological role, redox regulated molecular chaperone. Protects both thermally unfolding and oxidatively damaged proteins from irreversible aggregation. Plays an important role in the bacterial defense system toward oxidative stress. The protein is 33 kDa chaperonin of Shewanella loihica (strain ATCC BAA-1088 / PV-4).